The primary structure comprises 472 residues: MDITAILHMHAELSLTAVFILMFLLDLFLPATQRHWLRPMACILLTIQLLANLWPEEVTLFGGMYHSTPMASVLKSILTIGTILVFLQADTWLKREDTRHKQGEFYILTLSTLLGMYFMVSAGHFLLFFLGLELATVPMACLVAFDKYKGHSAEAGAKFILSALFSSGIFLYGISMIYGTAGTLYFEDIPAGLTGTPLQVLALVFFFSGLAFKLSLVPFHLWTADTYQGAPTTVSAYLSVISKGAAAFALMIILMKVFGPMTEQWSEILCIIIVATITIANLFAIRQNNLKRFMAFSSISQAGYIMLAVLAGTPQDMASLVYYIVVYIAANLAVFGVISTIEQHTHGKIEREDYNGLYKTNPKLTMVMTLALFSLAGIPPFAGFFSKFFVFMAAFHSGYYLIVFIALVNTIISLYYYLLIVKAMFITPNEDPIGNFRTATPMRISLLVCVAGIFVLGIISGVYQLLSDTAIL.

14 helical membrane passes run 11–31 (AELS…FLPA), 43–63 (ILLT…LFGG), 67–87 (STPM…LVFL), 103–123 (GEFY…VSAG), 125–145 (FLLF…LVAF), 159–179 (FILS…MIYG), 200–220 (VLAL…VPFH), 234–254 (VSAY…MIIL), 265–285 (WSEI…LFAI), 293–313 (FMAF…LAGT), 318–338 (ASLV…FGVI), 362–384 (PKLT…FAGF), 401–421 (LIVF…LLIV), and 446–466 (LLVC…YQLL).

It belongs to the complex I subunit 2 family. In terms of assembly, NDH-1 is composed of 14 different subunits. Subunits NuoA, H, J, K, L, M, N constitute the membrane sector of the complex.

The protein resides in the cell inner membrane. It carries out the reaction a quinone + NADH + 5 H(+)(in) = a quinol + NAD(+) + 4 H(+)(out). Functionally, NDH-1 shuttles electrons from NADH, via FMN and iron-sulfur (Fe-S) centers, to quinones in the respiratory chain. The immediate electron acceptor for the enzyme in this species is believed to be a menaquinone. Couples the redox reaction to proton translocation (for every two electrons transferred, four hydrogen ions are translocated across the cytoplasmic membrane), and thus conserves the redox energy in a proton gradient. This chain is NADH-quinone oxidoreductase subunit N, found in Phocaeicola vulgatus (strain ATCC 8482 / DSM 1447 / JCM 5826 / CCUG 4940 / NBRC 14291 / NCTC 11154) (Bacteroides vulgatus).